The sequence spans 97 residues: uncharacterized protein (97 aa).

Ser-2 bears the N-acetylserine mark.

This is an uncharacterized protein from Mycobacterium tuberculosis (strain ATCC 25618 / H37Rv).